The following is a 90-amino-acid chain: Putative Fis-like DNA-binding protein (90 aa).

The H-T-H motif DNA-binding region spans 66–85 (QSRAAALLGIHRATLRKKLK).

It belongs to the transcriptional regulatory Fis family.

This chain is Putative Fis-like DNA-binding protein, found in Xylella fastidiosa (strain Temecula1 / ATCC 700964).